The primary structure comprises 578 residues: Proteasome-associated ATPase (578 aa).

The stretch at 35–84 (RHLTALEEQLGAARTRLAQVSAQNDRLATTLREARDQIVALKAEVDRLGQ) forms a coiled coil. Residue 266 to 271 (GCGKTL) coordinates ATP. The segment at 577-578 (YL) is docks into pockets in the proteasome alpha-ring.

The protein belongs to the AAA ATPase family. Homohexamer. Assembles into a hexameric ring structure that caps the 20S proteasome core. Strongly interacts with the prokaryotic ubiquitin-like protein Pup through a hydrophobic interface; the interacting region of ARC lies in its N-terminal coiled-coil domain. There is one Pup binding site per ARC hexamer ring. Upon ATP-binding, the C-terminus of ARC interacts with the alpha-rings of the proteasome core, possibly by binding to the intersubunit pockets.

The protein operates within protein degradation; proteasomal Pup-dependent pathway. Functionally, ATPase which is responsible for recognizing, binding, unfolding and translocation of pupylated proteins into the bacterial 20S proteasome core particle. May be essential for opening the gate of the 20S proteasome via an interaction with its C-terminus, thereby allowing substrate entry and access to the site of proteolysis. Thus, the C-termini of the proteasomal ATPase may function like a 'key in a lock' to induce gate opening and therefore regulate proteolysis. The sequence is that of Proteasome-associated ATPase from Kineococcus radiotolerans (strain ATCC BAA-149 / DSM 14245 / SRS30216).